Reading from the N-terminus, the 563-residue chain is Arginine--tRNA ligase (563 aa).

A 'HIGH' region motif is present at residues 121 to 131 (PNIAKPFSIGH).

The protein belongs to the class-I aminoacyl-tRNA synthetase family. Monomer.

It localises to the cytoplasm. The catalysed reaction is tRNA(Arg) + L-arginine + ATP = L-arginyl-tRNA(Arg) + AMP + diphosphate. In Streptococcus pneumoniae (strain Hungary19A-6), this protein is Arginine--tRNA ligase.